The chain runs to 222 residues: Oligoribonuclease (222 aa).

Positions 19 to 38 (PMASSSSTGKQEESVNGSLE) are disordered. Over residues 21–35 (ASSSSTGKQEESVNG) the composition is skewed to polar residues. In terms of domain architecture, Exonuclease spans 46 to 210 (LVWIDLEMTG…DDIRESIKEL (165 aa)). The active site involves H167.

It belongs to the oligoribonuclease family.

In terms of biological role, 3'-to-5' exoribonuclease specific for small oligoribonucleotides. The polypeptide is Oligoribonuclease (Arabidopsis thaliana (Mouse-ear cress)).